The sequence spans 200 residues: GTP cyclohydrolase-2 (200 aa).

Residue 50-54 participates in GTP binding; it reads RVHSE. Zn(2+) contacts are provided by Cys55, Cys66, and Cys68. Residues Gln71, 93–95, and Thr115 each bind GTP; that span reads EGR. Residue Asp127 is the Proton acceptor of the active site. Arg129 (nucleophile) is an active-site residue. 2 residues coordinate GTP: Thr150 and Lys155.

This sequence belongs to the GTP cyclohydrolase II family. The cofactor is Zn(2+).

It catalyses the reaction GTP + 4 H2O = 2,5-diamino-6-hydroxy-4-(5-phosphoribosylamino)-pyrimidine + formate + 2 phosphate + 3 H(+). It functions in the pathway cofactor biosynthesis; riboflavin biosynthesis; 5-amino-6-(D-ribitylamino)uracil from GTP: step 1/4. Catalyzes the conversion of GTP to 2,5-diamino-6-ribosylamino-4(3H)-pyrimidinone 5'-phosphate (DARP), formate and pyrophosphate. This is GTP cyclohydrolase-2 from Acinetobacter baumannii (strain AB0057).